The sequence spans 144 residues: Augurin-B (144 aa).

Residues methionine 1–serine 18 form the signal peptide. Positions isoleucine 19–threonine 68 are excised as a propeptide. The segment at arginine 109–tyrosine 144 is disordered. Over residues aspartate 112–asparagine 122 the composition is skewed to basic and acidic residues.

This sequence belongs to the augurin family.

It is found in the secreted. It localises to the cytoplasm. The protein localises to the apical cell membrane. Its function is as follows. Probable hormone. Required for the proper formation of the central nervous system by attenuating cell proliferation during development. The polypeptide is Augurin-B (Danio rerio (Zebrafish)).